The sequence spans 431 residues: 3-phosphoshikimate 1-carboxyvinyltransferase (431 aa).

3-phosphoshikimate is bound by residues lysine 21, serine 22, and arginine 26. Residue lysine 21 coordinates phosphoenolpyruvate. Phosphoenolpyruvate contacts are provided by glycine 93 and arginine 121. The 3-phosphoshikimate site is built by serine 166, glutamine 168, aspartate 318, and lysine 345. Glutamine 168 contributes to the phosphoenolpyruvate binding site. The active-site Proton acceptor is the aspartate 318. The phosphoenolpyruvate site is built by arginine 349 and arginine 391.

This sequence belongs to the EPSP synthase family. Monomer.

It is found in the cytoplasm. It carries out the reaction 3-phosphoshikimate + phosphoenolpyruvate = 5-O-(1-carboxyvinyl)-3-phosphoshikimate + phosphate. Its pathway is metabolic intermediate biosynthesis; chorismate biosynthesis; chorismate from D-erythrose 4-phosphate and phosphoenolpyruvate: step 6/7. Its function is as follows. Catalyzes the transfer of the enolpyruvyl moiety of phosphoenolpyruvate (PEP) to the 5-hydroxyl of shikimate-3-phosphate (S3P) to produce enolpyruvyl shikimate-3-phosphate and inorganic phosphate. This is 3-phosphoshikimate 1-carboxyvinyltransferase from Sulfurihydrogenibium sp. (strain YO3AOP1).